Reading from the N-terminus, the 128-residue chain is Early E3 14.5 kDa protein (128 aa).

It belongs to the adenoviridae E3_15 family.

Protects virus-infected cells from TNF-induced cytolysis. The protein is Early E3 14.5 kDa protein of Human adenovirus C serotype 5 (HAdV-5).